A 299-amino-acid polypeptide reads, in one-letter code: GTP cyclohydrolase FolE2 (299 aa).

The disordered stretch occupies residues 1 to 25 (MKTKQWPSKTERHKRFGSVPPVAGK).

It belongs to the GTP cyclohydrolase IV family.

The enzyme catalyses GTP + H2O = 7,8-dihydroneopterin 3'-triphosphate + formate + H(+). It functions in the pathway cofactor biosynthesis; 7,8-dihydroneopterin triphosphate biosynthesis; 7,8-dihydroneopterin triphosphate from GTP: step 1/1. Functionally, converts GTP to 7,8-dihydroneopterin triphosphate. The sequence is that of GTP cyclohydrolase FolE2 from Halalkalibacterium halodurans (strain ATCC BAA-125 / DSM 18197 / FERM 7344 / JCM 9153 / C-125) (Bacillus halodurans).